The sequence spans 295 residues: Protease HtpX homolog (295 aa).

2 helical membrane-spanning segments follow: residues 15–35 (LVMA…GYAF) and 39–59 (AQTG…VILG). His143 provides a ligand contact to Zn(2+). Glu144 is a catalytic residue. A Zn(2+)-binding site is contributed by His147. The next 2 membrane-spanning stretches (helical) occupy residues 159-179 (ALAL…AMWW) and 195-215 (VIML…ASMA). Zn(2+) is bound at residue Glu224.

Belongs to the peptidase M48B family. The cofactor is Zn(2+).

The protein localises to the cell membrane. The chain is Protease HtpX homolog from Ligilactobacillus salivarius (strain UCC118) (Lactobacillus salivarius).